A 38-amino-acid polypeptide reads, in one-letter code: Large ribosomal subunit protein bL36 (38 aa).

Belongs to the bacterial ribosomal protein bL36 family.

The chain is Large ribosomal subunit protein bL36 from Azotobacter vinelandii (strain DJ / ATCC BAA-1303).